The sequence spans 99 residues: Aspartyl/glutamyl-tRNA(Asn/Gln) amidotransferase subunit C (99 aa).

Belongs to the GatC family. In terms of assembly, heterotrimer of A, B and C subunits.

The enzyme catalyses L-glutamyl-tRNA(Gln) + L-glutamine + ATP + H2O = L-glutaminyl-tRNA(Gln) + L-glutamate + ADP + phosphate + H(+). It catalyses the reaction L-aspartyl-tRNA(Asn) + L-glutamine + ATP + H2O = L-asparaginyl-tRNA(Asn) + L-glutamate + ADP + phosphate + 2 H(+). In terms of biological role, allows the formation of correctly charged Asn-tRNA(Asn) or Gln-tRNA(Gln) through the transamidation of misacylated Asp-tRNA(Asn) or Glu-tRNA(Gln) in organisms which lack either or both of asparaginyl-tRNA or glutaminyl-tRNA synthetases. The reaction takes place in the presence of glutamine and ATP through an activated phospho-Asp-tRNA(Asn) or phospho-Glu-tRNA(Gln). This Burkholderia cenocepacia (strain ATCC BAA-245 / DSM 16553 / LMG 16656 / NCTC 13227 / J2315 / CF5610) (Burkholderia cepacia (strain J2315)) protein is Aspartyl/glutamyl-tRNA(Asn/Gln) amidotransferase subunit C.